A 301-amino-acid polypeptide reads, in one-letter code: Sulfate adenylyltransferase subunit 2 (301 aa).

It belongs to the PAPS reductase family. CysD subfamily. Heterodimer composed of CysD, the smaller subunit, and CysN.

The catalysed reaction is sulfate + ATP + H(+) = adenosine 5'-phosphosulfate + diphosphate. It functions in the pathway sulfur metabolism; hydrogen sulfide biosynthesis; sulfite from sulfate: step 1/3. With CysN forms the ATP sulfurylase (ATPS) that catalyzes the adenylation of sulfate producing adenosine 5'-phosphosulfate (APS) and diphosphate, the first enzymatic step in sulfur assimilation pathway. APS synthesis involves the formation of a high-energy phosphoric-sulfuric acid anhydride bond driven by GTP hydrolysis by CysN coupled to ATP hydrolysis by CysD. This is Sulfate adenylyltransferase subunit 2 from Shewanella loihica (strain ATCC BAA-1088 / PV-4).